A 252-amino-acid chain; its full sequence is Diphthine synthase (252 aa).

S-adenosyl-L-methionine contacts are provided by residues Leu-9, Asp-85, Val-88, 113-114 (SI), Leu-165, Ala-202, and His-227.

It belongs to the diphthine synthase family. Homodimer.

It carries out the reaction 2-[(3S)-amino-3-carboxypropyl]-L-histidyl-[translation elongation factor 2] + 3 S-adenosyl-L-methionine = diphthine-[translation elongation factor 2] + 3 S-adenosyl-L-homocysteine + 3 H(+). It functions in the pathway protein modification; peptidyl-diphthamide biosynthesis. Functionally, S-adenosyl-L-methionine-dependent methyltransferase that catalyzes the trimethylation of the amino group of the modified target histidine residue in translation elongation factor 2 (EF-2), to form an intermediate called diphthine. The three successive methylation reactions represent the second step of diphthamide biosynthesis. This chain is Diphthine synthase, found in Methanospirillum hungatei JF-1 (strain ATCC 27890 / DSM 864 / NBRC 100397 / JF-1).